The primary structure comprises 368 residues: Endophilin-A2 (368 aa).

The membrane-binding amphipathic helix stretch occupies residues 1-21 (MSVAGLKKQFYKASQLVSEKV). The region spanning 18-249 (SEKVGGAEGT…LKRRVREASS (232 aa)) is the BAR domain. The tract at residues 60-87 (PNPASRAKLTMLNTVSKIRGQVKNPGYP) is required for dimerization upon membrane association. Residues 180-250 (DEELRQALEK…KRRVREASSR (71 aa)) are a coiled coil. The tract at residues 218–254 (LVDAQLDYHRQAVQILEELADKLKRRVREASSRPKRE) is interaction with ARC. Residues 244–307 (VREASSRPKR…MPSKSMPPLD (64 aa)) form a disordered region. The span at 245–263 (REASSRPKREFKPRPREPF) shows a compositional bias: basic and acidic residues. Phosphoserine is present on residues Ser288 and Ser292. An SH3 domain is found at 306–365 (LDQPSCKALYDFEPENDGELGFREGDLITLTNQIDENWYEGMLHGQSGFFPLSYVQVLVP). Tyr315 carries the post-translational modification Phosphotyrosine.

It belongs to the endophilin family. Interacts with ARC, SYNJ1 and DNM1. Interacts with PDCD6IP. Interacts with BIN2.

The protein resides in the cytoplasm. The protein localises to the early endosome membrane. It localises to the cell projection. Its subcellular location is the podosome. Implicated in endocytosis. May recruit other proteins to membranes with high curvature. In Mus musculus (Mouse), this protein is Endophilin-A2 (Sh3gl1).